A 698-amino-acid chain; its full sequence is Probable Xaa-Pro aminopeptidase P (698 aa).

Positions 509, 520, 604, and 618 each coordinate Mn(2+).

It belongs to the peptidase M24B family. Mn(2+) is required as a cofactor.

The enzyme catalyses Release of any N-terminal amino acid, including proline, that is linked to proline, even from a dipeptide or tripeptide.. In terms of biological role, catalyzes the removal of a penultimate prolyl residue from the N-termini of peptides. In Trichophyton verrucosum (strain HKI 0517), this protein is Probable Xaa-Pro aminopeptidase P (AMPP).